A 432-amino-acid chain; its full sequence is Interleukin-11 receptor subunit alpha-2 (432 aa).

Positions 1–23 (MSSSCSGLTRVLVAVATALVSSS) are cleaved as a signal peptide. The Extracellular segment spans residues 24–372 (SPCPQAWGPP…DPLEQVAVLA (349 aa)). The 84-residue stretch at 27–110 (PQAWGPPGVQ…SGGMVTLKLG (84 aa)) folds into the Ig-like C2-type domain. Disulfide bonds link cysteine 48-cysteine 94, cysteine 120-cysteine 130, and cysteine 170-cysteine 180. 2 consecutive Fibronectin type-III domains span residues 112–219 (PPAR…LRPD) and 220–317 (PPQG…TPST). Asparagine 127 carries an N-linked (GlcNAc...) asparagine glycan. The disordered stretch occupies residues 151-170 (KTLPGAESQRESPSTGPWPC). A glycan (N-linked (GlcNAc...) asparagine) is linked at asparagine 194. A WSXWS motif motif is present at residues 304–308 (WSAWS). Residues 373–393 (SLGIFSCLGLAVGALALGLWL) traverse the membrane as a helical segment. Residues 394 to 432 (RLRRSGKEGPQKPGLLAPMIPVEKLPGIPNLQRTPENFS) are Cytoplasmic-facing.

Belongs to the type I cytokine receptor family. Type 3 subfamily. On ligand binding, forms a multimer complex with IL6ST/gp130. As to expression, expression restricted to testis, lymph node and thymus. Highest level in testis.

It localises to the membrane. Its function is as follows. Receptor for interleukin-11. The receptor systems for IL6, LIF, OSM, CNTF, IL11 and CT1 can utilize IL6ST for initiating signal transmission. The IL11/IL11RA/IL6ST complex may be involved in the control of proliferation and/or differentiation of skeletogenic progenitor or other mesenchymal cells. This chain is Interleukin-11 receptor subunit alpha-2 (Il11ra2), found in Mus musculus (Mouse).